Reading from the N-terminus, the 87-residue chain is Large ribosomal subunit protein bL31B (87 aa).

Belongs to the bacterial ribosomal protein bL31 family. Type B subfamily. In terms of assembly, part of the 50S ribosomal subunit.

In Staphylococcus carnosus (strain TM300), this protein is Large ribosomal subunit protein bL31B.